The following is a 125-amino-acid chain: Large ribosomal subunit protein bL12 (125 aa).

This sequence belongs to the bacterial ribosomal protein bL12 family. Homodimer. Part of the ribosomal stalk of the 50S ribosomal subunit. Forms a multimeric L10(L12)X complex, where L10 forms an elongated spine to which 2 to 4 L12 dimers bind in a sequential fashion. Binds GTP-bound translation factors.

Forms part of the ribosomal stalk which helps the ribosome interact with GTP-bound translation factors. Is thus essential for accurate translation. This chain is Large ribosomal subunit protein bL12, found in Francisella tularensis subsp. holarctica (strain FTNF002-00 / FTA).